Reading from the N-terminus, the 207-residue chain is 3-demethoxyubiquinol 3-hydroxylase (207 aa).

Residues E56, E86, H89, E138, E170, and H173 each contribute to the Fe cation site.

It belongs to the COQ7 family. It depends on Fe cation as a cofactor.

It is found in the cell membrane. The catalysed reaction is a 5-methoxy-2-methyl-3-(all-trans-polyprenyl)benzene-1,4-diol + AH2 + O2 = a 3-demethylubiquinol + A + H2O. It functions in the pathway cofactor biosynthesis; ubiquinone biosynthesis. In terms of biological role, catalyzes the hydroxylation of 2-nonaprenyl-3-methyl-6-methoxy-1,4-benzoquinol during ubiquinone biosynthesis. This chain is 3-demethoxyubiquinol 3-hydroxylase, found in Cupriavidus taiwanensis (strain DSM 17343 / BCRC 17206 / CCUG 44338 / CIP 107171 / LMG 19424 / R1) (Ralstonia taiwanensis (strain LMG 19424)).